Consider the following 244-residue polypeptide: Deoxynucleotide monophosphate kinase (244 aa).

K10 is a binding site for dGMP. Residues R11, G13, D15, and T16 each contribute to the ATP site. DGMP is bound by residues I36, K37, R70, R137, G144, T145, V149, W157, D180, R182, Q183, E186, and T213.

The protein belongs to the dNMP kinase family. In terms of assembly, homodimer. Mg(2+) is required as a cofactor.

The catalysed reaction is dTMP + ATP = dTDP + ADP. It catalyses the reaction dGMP + ATP = dGDP + ADP. It carries out the reaction 5-hydroxymethyl-dCMP + ATP = 5-hydroxymethyl-dCDP + ADP. Its function is as follows. Allows the synthesis of deoxyribonucleoside triphosphates necessary for the rapid viral DNA replication. Phosphorylates dGMP, dTMP and 5-hydroxymethyl-dCMP (hmdCMP) while excluding dCMP and dAMP. The phosphorylation of 5-hydroxymethyl-dCMP represents the first step in the replacement of cytosine by hydroxymethylcytosine in new viral DNA genomes. The polypeptide is Deoxynucleotide monophosphate kinase (1) (Escherichia phage RB69 (Bacteriophage RB69)).